Consider the following 689-residue polypeptide: Transmembrane protein 214 (689 aa).

Disordered regions lie at residues 1 to 37 (MATKTAGVGRWEVVKKGRRPGVGAGAGGRGGGRNRRA) and 70 to 107 (RQNKEQVPPPAVEPKKPGNKKQPKKVATPPNQNQKQGR). A2 is modified (N-acetylalanine). Gly residues predominate over residues 20–31 (PGVGAGAGGRGG). N269 and N307 each carry an N-linked (GlcNAc...) asparagine glycan. Helical transmembrane passes span 480–500 (LPWTRLLLLLLVFAVGFLCHD) and 616–636 (LPLLFHQNVLLPLWHLLLEAL).

Belongs to the TMEM214 family. Constitutively interacts with CASP4; required for the localization of procaspase 4 to the ER.

The protein localises to the endoplasmic reticulum membrane. Functionally, critical mediator, in cooperation with CASP4, of endoplasmic reticulum-stress induced apoptosis. Required or the activation of CASP4 following endoplasmic reticulum stress. The chain is Transmembrane protein 214 (TMEM214) from Homo sapiens (Human).